Reading from the N-terminus, the 79-residue chain is Darcynin (79 aa).

This sequence belongs to the darcynin family.

This chain is Darcynin, found in Chromobacterium violaceum (strain ATCC 12472 / DSM 30191 / JCM 1249 / CCUG 213 / NBRC 12614 / NCIMB 9131 / NCTC 9757 / MK).